Reading from the N-terminus, the 117-residue chain is Putative membrane protein insertion efficiency factor (117 aa).

This sequence belongs to the UPF0161 family.

It localises to the cell inner membrane. In terms of biological role, could be involved in insertion of integral membrane proteins into the membrane. The chain is Putative membrane protein insertion efficiency factor from Bartonella bacilliformis (strain ATCC 35685 / KC583 / Herrer 020/F12,63).